The primary structure comprises 266 residues: MNQRLVYVVSDSGGETAELVVRAAASQFYNSHIQLKRVPYVEDKTMLAEVVALAKMNQAIIAFTLVVPEMRQFLIEEAAREGVVAYDIIGPLIEKMSDLFKLTPRYEPGQVRVLDEDYFKKIEAIEFAVKYDDGRDPRGILRADIVLIGVSRTSKTPLSQYLAHKRLKVANVPIVPEVEPPEQLFKVPPEKCFGLKISPEKLLSIRRERLKSLGLNDQAIYANMDRIKEELAYFDGIVKKIGCDVIDVTNKAVEETANIIMKKRRL.

Gly-149 to Thr-156 is a binding site for ADP.

This sequence belongs to the pyruvate, phosphate/water dikinase regulatory protein family. PDRP subfamily.

It catalyses the reaction N(tele)-phospho-L-histidyl/L-threonyl-[pyruvate, phosphate dikinase] + ADP = N(tele)-phospho-L-histidyl/O-phospho-L-threonyl-[pyruvate, phosphate dikinase] + AMP + H(+). The catalysed reaction is N(tele)-phospho-L-histidyl/O-phospho-L-threonyl-[pyruvate, phosphate dikinase] + phosphate + H(+) = N(tele)-phospho-L-histidyl/L-threonyl-[pyruvate, phosphate dikinase] + diphosphate. Functionally, bifunctional serine/threonine kinase and phosphorylase involved in the regulation of the pyruvate, phosphate dikinase (PPDK) by catalyzing its phosphorylation/dephosphorylation. This chain is Putative pyruvate, phosphate dikinase regulatory protein, found in Geobacillus sp. (strain WCH70).